Here is a 530-residue protein sequence, read N- to C-terminus: Poly(U)-binding-splicing factor PUF60 (530 aa).

Positions 1-487 (MATATIALGT…EDAEIIVKIF (487 aa)) are inhibits homodimerization. Lys-14 is covalently cross-linked (Glycyl lysine isopeptide (Lys-Gly) (interchain with G-Cter in SUMO2)). Thr-31 carries the post-translational modification Phosphothreonine. Residues 48–530 (QSIKSVLVKQ…ERFDNSDLSA (483 aa)) are inhibits transcriptional repression, interaction with ERCC3 and apoptosis induction. Residue Lys-51 forms a Glycyl lysine isopeptide (Lys-Gly) (interchain with G-Cter in SUMO2) linkage. Ser-83 carries the phosphoserine modification. RRM domains follow at residues 100–178 (CRVY…RPSN) and 197–275 (NRIY…KAVT). Ser-215 carries the post-translational modification Phosphoserine. Lys-222 bears the N6-acetyllysine mark. The residue at position 285 (Thr-285) is a Phosphothreonine. The segment at 387 to 408 (KKEKEEEELFPESERPEMLSEQ) is disordered. Residue Lys-390 forms a Glycyl lysine isopeptide (Lys-Gly) (interchain with G-Cter in SUMO2) linkage. The segment covering 398 to 408 (ESERPEMLSEQ) has biased composition (basic and acidic residues). Lys-425 bears the N6-acetyllysine mark. A Glycyl lysine isopeptide (Lys-Gly) (interchain with G-Cter in SUMO2) cross-link involves residue Lys-429. In terms of domain architecture, RRM 3; atypical spans 433–520 (TVMVLRNMVD…RKVVAEVYDQ (88 aa)).

This sequence belongs to the RRM half pint family. In terms of assembly, homodimer. Associates with the spliceosome. Found in a complex with RO60 and Y5 RNA. Found in a complex with FUBP1 and far upstream element (FUSE) DNA segment. Interacts directly with ERCC3. Interacts with CDK7 and GTF2H1. Interacts with SRSF11/P54. Interacts with ARGLU1; interaction may be involved in ARGLU1-mediated modulation of alternative splicing.

The protein resides in the nucleus. In terms of biological role, DNA- and RNA-binding protein, involved in several nuclear processes such as pre-mRNA splicing, apoptosis and transcription regulation. In association with FUBP1 regulates MYC transcription at the P2 promoter through the core-TFIIH basal transcription factor. Acts as a transcriptional repressor through the core-TFIIH basal transcription factor. Represses FUBP1-induced transcriptional activation but not basal transcription. Decreases ERCC3 helicase activity. Is also involved in pre-mRNA splicing. Promotes splicing of an intron with weak 3'-splice site and pyrimidine tract in a cooperative manner with U2AF2. Involved in apoptosis induction when overexpressed in HeLa cells. Modulates alternative splicing of several mRNAs. Binds to relaxed DNA of active promoter regions. Binds to the pyrimidine tract and 3'-splice site regions of pre-mRNA; binding is enhanced in presence of U2AF2. Binds to Y5 RNA in association with RO60. Binds to poly(U) RNA. This is Poly(U)-binding-splicing factor PUF60 from Bos taurus (Bovine).